Consider the following 200-residue polypeptide: Imidazole glycerol phosphate synthase subunit HisH (200 aa).

Positions 3–200 (EVALIDAGGA…LRNFLEMDAA (198 aa)) constitute a Glutamine amidotransferase type-1 domain. Cys-78 (nucleophile) is an active-site residue. Active-site residues include His-179 and Glu-181.

Heterodimer of HisH and HisF.

The protein localises to the cytoplasm. The catalysed reaction is 5-[(5-phospho-1-deoxy-D-ribulos-1-ylimino)methylamino]-1-(5-phospho-beta-D-ribosyl)imidazole-4-carboxamide + L-glutamine = D-erythro-1-(imidazol-4-yl)glycerol 3-phosphate + 5-amino-1-(5-phospho-beta-D-ribosyl)imidazole-4-carboxamide + L-glutamate + H(+). The enzyme catalyses L-glutamine + H2O = L-glutamate + NH4(+). It functions in the pathway amino-acid biosynthesis; L-histidine biosynthesis; L-histidine from 5-phospho-alpha-D-ribose 1-diphosphate: step 5/9. IGPS catalyzes the conversion of PRFAR and glutamine to IGP, AICAR and glutamate. The HisH subunit catalyzes the hydrolysis of glutamine to glutamate and ammonia as part of the synthesis of IGP and AICAR. The resulting ammonia molecule is channeled to the active site of HisF. This chain is Imidazole glycerol phosphate synthase subunit HisH, found in Xylella fastidiosa (strain Temecula1 / ATCC 700964).